Here is a 302-residue protein sequence, read N- to C-terminus: MEKLREELLQANVGTVKENERMASHTTIKIGGPADLFVEPKHIDGLKKTMEIVRKYNVPWRAIGRGSNLLVRDGGIEGVVIKLGEGLDDLYIHDTEVTVGGGYSLIKLATVISKQGLSGLEFAGGIPGTVGGAVYMNAGAHGSDMSRIVKKAQILFEDGTIEWLTNEEMEFSYRTSVLQKKRKGICIAATLEMKKGNHDEIVAAMQKNKDYRRETQPWNYPCAGSIFRNPLPQYAGQLIEQAGLKGYTIGGAKISEQHANFIVNAGGATANDVLELIDYVKKTIYDLYGVSLQTEVEIVGRK.

The region spanning 30 to 196 (IGGPADLFVE…IAATLEMKKG (167 aa)) is the FAD-binding PCMH-type domain. The active site involves Arg174. Ser225 (proton donor) is an active-site residue. The active site involves Glu295.

The protein belongs to the MurB family. It depends on FAD as a cofactor.

The protein localises to the cytoplasm. It catalyses the reaction UDP-N-acetyl-alpha-D-muramate + NADP(+) = UDP-N-acetyl-3-O-(1-carboxyvinyl)-alpha-D-glucosamine + NADPH + H(+). The protein operates within cell wall biogenesis; peptidoglycan biosynthesis. Its function is as follows. Cell wall formation. This Anoxybacillus flavithermus (strain DSM 21510 / WK1) protein is UDP-N-acetylenolpyruvoylglucosamine reductase.